Here is a 174-residue protein sequence, read N- to C-terminus: Large ribosomal subunit protein uL16 (174 aa).

It belongs to the universal ribosomal protein uL16 family.

The protein is Large ribosomal subunit protein uL16 of Staphylothermus marinus (strain ATCC 43588 / DSM 3639 / JCM 9404 / F1).